An 89-amino-acid chain; its full sequence is Class II hydrophobin 2 (89 aa).

A signal peptide spans 1–15 (MKLYIAAALLTLGLA). 4 cysteine pairs are disulfide-bonded: cysteine 34–cysteine 74, cysteine 45–cysteine 66, cysteine 46–cysteine 58, and cysteine 75–cysteine 86.

It belongs to the cerato-ulmin hydrophobin family. In terms of assembly, homodimer. Homodimers further self-assemble to form highly ordered films at water-air interfaces through intermolecular interactions.

It is found in the secreted. The protein resides in the cell wall. Its function is as follows. Aerial growth, conidiation, and dispersal of filamentous fungi in the environment rely upon a capability of their secreting small amphipathic proteins called hydrophobins (HPBs) with low sequence identity. Class I can self-assemble into an outermost layer of rodlet bundles on aerial cell surfaces, conferring cellular hydrophobicity that supports fungal growth, development and dispersal; whereas Class II form highly ordered films at water-air interfaces through intermolecular interactions but contribute nothing to the rodlet structure. The chain is Class II hydrophobin 2 from Trichoderma asperellum (strain ATCC 204424 / CBS 433.97 / NBRC 101777).